A 218-amino-acid chain; its full sequence is Dynein axonemal assembly factor 6 (218 aa).

The interval 66-103 is disordered; sequence MGPGNIGPPKAKESKAIPEPRSDESENIWNPEEVPEGA. The segment covering 75–89 has biased composition (basic and acidic residues); that stretch reads KAKESKAIPEPRSDE.

The protein belongs to the PIH1 family. In terms of assembly, interacts with HSPA1A/B, HSP90AA1 and DNAI2. Interacts with DNAAF2 and DNAAF4. As to expression, specifically expressed in testis. Detected in pachytene spermatocytes from 5 weeks of age and in pachytene and diplotene spermatocytes of adult mice. Not detected in spermatids or mature sperm.

It localises to the cytoplasm. The protein resides in the golgi apparatus. It is found in the trans-Golgi network. Its function is as follows. Plays a role in cytoplasmic pre-assembly of axonemal dynein. In Mus musculus (Mouse), this protein is Dynein axonemal assembly factor 6.